The primary structure comprises 249 residues: Cytochrome c oxidase subunit 2 (249 aa).

Transmembrane regions (helical) follow at residues 40-60 and 81-101; these read NIMF…YTIT and IIWT…SFIL. Residues His184, Cys219, Glu221, Cys223, His227, and Met230 each coordinate Cu cation. Glu221 serves as a coordination point for Mg(2+).

It belongs to the cytochrome c oxidase subunit 2 family. In terms of assembly, component of the cytochrome c oxidase (complex IV, CIV), a multisubunit enzyme composed of a catalytic core of 3 subunits and several supernumerary subunits. The complex exists as a monomer or a dimer and forms supercomplexes (SCs) in the inner mitochondrial membrane with ubiquinol-cytochrome c oxidoreductase (cytochrome b-c1 complex, complex III, CIII). It depends on Cu cation as a cofactor.

Its subcellular location is the mitochondrion inner membrane. It catalyses the reaction 4 Fe(II)-[cytochrome c] + O2 + 8 H(+)(in) = 4 Fe(III)-[cytochrome c] + 2 H2O + 4 H(+)(out). Its function is as follows. Component of the cytochrome c oxidase, the last enzyme in the mitochondrial electron transport chain which drives oxidative phosphorylation. The respiratory chain contains 3 multisubunit complexes succinate dehydrogenase (complex II, CII), ubiquinol-cytochrome c oxidoreductase (cytochrome b-c1 complex, complex III, CIII) and cytochrome c oxidase (complex IV, CIV), that cooperate to transfer electrons derived from NADH and succinate to molecular oxygen, creating an electrochemical gradient over the inner membrane that drives transmembrane transport and the ATP synthase. Cytochrome c oxidase is the component of the respiratory chain that catalyzes the reduction of oxygen to water. Electrons originating from reduced cytochrome c in the intermembrane space (IMS) are transferred via the dinuclear copper A center (CU(A)) of subunit 2 and heme A of subunit 1 to the active site in subunit 1, a binuclear center (BNC) formed by heme A3 and copper B (CU(B)). The BNC reduces molecular oxygen to 2 water molecules using 4 electrons from cytochrome c in the IMS and 4 protons from the mitochondrial matrix. This is Cytochrome c oxidase subunit 2 (COX2) from Vanderwaltozyma polyspora (strain ATCC 22028 / DSM 70294 / BCRC 21397 / CBS 2163 / NBRC 10782 / NRRL Y-8283 / UCD 57-17) (Kluyveromyces polysporus).